The primary structure comprises 374 residues: Queuine tRNA-ribosyltransferase (374 aa).

Residue D92 is the Proton acceptor of the active site. Substrate contacts are provided by residues 92-96 (DSGGY), D146, Q193, and G220. Residues 251 to 257 (GVGKPDD) form an RNA binding region. Residue D270 is the Nucleophile of the active site. Residues 275–279 (TRSGR) form an RNA binding; important for wobble base 34 recognition region. Residues C308, C310, C313, and H339 each contribute to the Zn(2+) site.

It belongs to the queuine tRNA-ribosyltransferase family. In terms of assembly, homodimer. Within each dimer, one monomer is responsible for RNA recognition and catalysis, while the other monomer binds to the replacement base PreQ1. The cofactor is Zn(2+).

It carries out the reaction 7-aminomethyl-7-carbaguanine + guanosine(34) in tRNA = 7-aminomethyl-7-carbaguanosine(34) in tRNA + guanine. Its pathway is tRNA modification; tRNA-queuosine biosynthesis. In terms of biological role, catalyzes the base-exchange of a guanine (G) residue with the queuine precursor 7-aminomethyl-7-deazaguanine (PreQ1) at position 34 (anticodon wobble position) in tRNAs with GU(N) anticodons (tRNA-Asp, -Asn, -His and -Tyr). Catalysis occurs through a double-displacement mechanism. The nucleophile active site attacks the C1' of nucleotide 34 to detach the guanine base from the RNA, forming a covalent enzyme-RNA intermediate. The proton acceptor active site deprotonates the incoming PreQ1, allowing a nucleophilic attack on the C1' of the ribose to form the product. After dissociation, two additional enzymatic reactions on the tRNA convert PreQ1 to queuine (Q), resulting in the hypermodified nucleoside queuosine (7-(((4,5-cis-dihydroxy-2-cyclopenten-1-yl)amino)methyl)-7-deazaguanosine). This is Queuine tRNA-ribosyltransferase from Novosphingobium aromaticivorans (strain ATCC 700278 / DSM 12444 / CCUG 56034 / CIP 105152 / NBRC 16084 / F199).